A 249-amino-acid polypeptide reads, in one-letter code: 5'-nucleotidase SurE (249 aa).

D9, D10, S40, and N92 together coordinate a divalent metal cation.

This sequence belongs to the SurE nucleotidase family. A divalent metal cation serves as cofactor.

It localises to the cytoplasm. It carries out the reaction a ribonucleoside 5'-phosphate + H2O = a ribonucleoside + phosphate. Nucleotidase that shows phosphatase activity on nucleoside 5'-monophosphates. The chain is 5'-nucleotidase SurE from Shewanella baltica (strain OS223).